The following is a 452-amino-acid chain: Septin-10 (452 aa).

Residues 36-302 form the Septin-type G domain; the sequence is QGFCFNILCV…ELYRRCKLQE (267 aa). The segment at 46–53 is G1 motif; the sequence is GETGIGKS. Residues 46-53, Gly101, 182-190, Gly236, and Arg251 each bind GTP; these read GETGIGKS and KADTISKSE. Residues 98 to 101 form a G3 motif region; it reads NTVG. The segment at 181-184 is G4 motif; sequence AKAD. Position 414 is a phosphoserine (Ser414).

It belongs to the TRAFAC class TrmE-Era-EngA-EngB-Septin-like GTPase superfamily. Septin GTPase family. As to quaternary structure, septins polymerize into heterooligomeric protein complexes that form filaments, and can associate with cellular membranes, actin filaments and microtubules. GTPase activity is required for filament formation. Interacts with ADGB. Proteolytically cleaved in vitro in a calmodulin-dependent manner.

Its subcellular location is the cytoplasm. It localises to the cytoskeleton. It is found in the cell projection. The protein localises to the cilium. The protein resides in the flagellum. In terms of biological role, filament-forming cytoskeletal GTPase. May play a role in cytokinesis (Potential). In Mus musculus (Mouse), this protein is Septin-10.